The sequence spans 64 residues: Large ribosomal subunit protein bL28 (64 aa).

Residues 1–21 (MAKKDQLTLRGPLYGNNRSHS) are disordered.

Belongs to the bacterial ribosomal protein bL28 family.

This chain is Large ribosomal subunit protein bL28, found in Mycoplasma genitalium (strain ATCC 33530 / DSM 19775 / NCTC 10195 / G37) (Mycoplasmoides genitalium).